The chain runs to 757 residues: Dapper homolog 2 (757 aa).

Residues 1 to 281 (MWAPSGQGPA…QSPLFALPKE (281 aa)) are inhibition of Nodal signaling. Residues 55–107 (RGQELRLEAALTALREQLSRLRRQDAGLKTHLDQLDQQISELQLDVSRSSCEA) are a coiled coil. Disordered regions lie at residues 486–540 (RRRV…CSES), 584–684 (RWQS…EGCF), and 696–728 (AEAG…PPVP). 2 stretches are compositionally biased toward basic and acidic residues: residues 505-516 (ERQRVTERDPSR) and 631-644 (ACAR…EHSA). Residues 645–656 (DCTSLYHSTIAE) are compositionally biased toward polar residues. A compositionally biased stretch (basic and acidic residues) spans 664-673 (SDHTANRFGD). The PDZ-binding signature appears at 754–757 (MTMV).

Belongs to the dapper family. As to quaternary structure, can form homodimers and heterodimers with DACT1 or DACT3. Interacts with CSNK1D, PKA catalytic subunit, PKC-type kinase, CSNK2B, DVL1, DVL2, DVL3, VANGL1, VANGL2, TGFBR1, CTNNB1, CTNND2, CTNND1, LEF1, TCF7, TCF7L1 and HDAC1. In terms of tissue distribution, expressed in kidney (inner medullary collecting duct). Expressed in epidermal keratinocytes and hair follicles.

Involved in regulation of intracellular signaling pathways during development. Negatively regulates the Nodal signaling pathway, possibly by promoting the lysosomal degradation of Nodal receptors, such as TGFBR1. May be involved in control of the morphogenetic behavior of kidney ureteric bud cells by keeping cells epithelial and restraining their mesenchymal character. May play an inhibitory role in the re-epithelialization of skin wounds by attenuating TGF-beta signaling. The chain is Dapper homolog 2 (Dact2) from Mus musculus (Mouse).